A 313-amino-acid chain; its full sequence is Ornithine carbamoyltransferase (313 aa).

Residues 57–60 (STRT), Gln-84, Arg-108, and 135–138 (HPCQ) each bind carbamoyl phosphate. Residues Asn-166, Asp-230, and 234 to 235 (SM) each bind L-ornithine. Carbamoyl phosphate-binding positions include 270–271 (CL) and Arg-298.

The protein belongs to the aspartate/ornithine carbamoyltransferase superfamily. OTCase family. In terms of assembly, homohexamer.

The protein localises to the cytoplasm. It catalyses the reaction carbamoyl phosphate + L-ornithine = L-citrulline + phosphate + H(+). Its pathway is amino-acid biosynthesis; L-arginine biosynthesis; L-arginine from L-ornithine and carbamoyl phosphate: step 1/3. Its function is as follows. Reversibly catalyzes the transfer of the carbamoyl group from carbamoyl phosphate (CP) to the N(epsilon) atom of ornithine (ORN) to produce L-citrulline. The chain is Ornithine carbamoyltransferase from Gloeobacter violaceus (strain ATCC 29082 / PCC 7421).